Here is a 512-residue protein sequence, read N- to C-terminus: GMP synthase [glutamine-hydrolyzing] (512 aa).

Residues 7-197 (TIIVLDFGSQ…VFGVCGCSEG (191 aa)) form the Glutamine amidotransferase type-1 domain. Catalysis depends on cysteine 84, which acts as the Nucleophile. Catalysis depends on residues histidine 171 and glutamate 173. The 190-residue stretch at 198 to 387 (WNMENFIEVE…LGIPDEIVWR (190 aa)) folds into the GMPS ATP-PPase domain. An ATP-binding site is contributed by 225–231 (SGGVDSS).

In terms of assembly, homodimer.

The catalysed reaction is XMP + L-glutamine + ATP + H2O = GMP + L-glutamate + AMP + diphosphate + 2 H(+). It participates in purine metabolism; GMP biosynthesis; GMP from XMP (L-Gln route): step 1/1. Functionally, catalyzes the synthesis of GMP from XMP. The sequence is that of GMP synthase [glutamine-hydrolyzing] from Bacillus cereus (strain B4264).